A 147-amino-acid polypeptide reads, in one-letter code: UPF0251 protein NT01CX_1491 (147 aa).

Belongs to the UPF0251 family.

The polypeptide is UPF0251 protein NT01CX_1491 (Clostridium novyi (strain NT)).